Consider the following 426-residue polypeptide: Histidine--tRNA ligase (426 aa).

Belongs to the class-II aminoacyl-tRNA synthetase family.

Its subcellular location is the cytoplasm. It catalyses the reaction tRNA(His) + L-histidine + ATP = L-histidyl-tRNA(His) + AMP + diphosphate + H(+). The chain is Histidine--tRNA ligase from Saccharolobus islandicus (strain Y.G.57.14 / Yellowstone #1) (Sulfolobus islandicus).